A 434-amino-acid chain; its full sequence is Ribosomal protein uS12 methylthiotransferase RimO (434 aa).

The MTTase N-terminal domain maps to Ala-2 to Pro-112. Cys-11, Cys-47, Cys-76, Cys-142, Cys-146, and Cys-149 together coordinate [4Fe-4S] cluster. One can recognise a Radical SAM core domain in the interval Leu-128–Arg-365. A TRAM domain is found at Gln-368–Ala-434.

The protein belongs to the methylthiotransferase family. RimO subfamily. It depends on [4Fe-4S] cluster as a cofactor.

It localises to the cytoplasm. The catalysed reaction is L-aspartate(89)-[ribosomal protein uS12]-hydrogen + (sulfur carrier)-SH + AH2 + 2 S-adenosyl-L-methionine = 3-methylsulfanyl-L-aspartate(89)-[ribosomal protein uS12]-hydrogen + (sulfur carrier)-H + 5'-deoxyadenosine + L-methionine + A + S-adenosyl-L-homocysteine + 2 H(+). In terms of biological role, catalyzes the methylthiolation of an aspartic acid residue of ribosomal protein uS12. This Thermus thermophilus (strain ATCC 27634 / DSM 579 / HB8) protein is Ribosomal protein uS12 methylthiotransferase RimO.